Reading from the N-terminus, the 151-residue chain is Inorganic triphosphatase (151 aa).

In terms of domain architecture, CYTH spans 1–148 (MTEIERKFLV…KRYKNKALAL (148 aa)). The active-site Proton acceptor is Tyr-27.

As to quaternary structure, homodimer.

The catalysed reaction is triphosphate + H2O = phosphate + diphosphate. Activated by magnesium and mangenese ions, and inhibited by calcium, zinc and copper ions. Involved in the hydrolysis of the beta-gamma-phosphoanhydride linkage of triphosphate-containing substrates (inorganic or nucleoside-linked). Catalyzes the hydrolysis of inorganic triphosphate (PPPi). The enzyme has a strong preference for linear PPPi compared with cyclic PPPi (cyclic trimetaphosphate) and to the linear P4. The longer chains polyphosphate are not hydrolyzed. It has only a slight thiamine triphosphatase (ThTPase) activity. Nucleoside triphosphatase activity is negligible in the presence of magnesium, but a small activity is observed in the presence of manganese, in particular with GTP. This chain is Inorganic triphosphatase, found in Nitrosomonas europaea (strain ATCC 19718 / CIP 103999 / KCTC 2705 / NBRC 14298).